The following is a 282-amino-acid chain: Probable endonuclease 4 (282 aa).

Positions 71, 111, 147, 181, 184, 218, 231, 233, and 263 each coordinate Zn(2+).

Belongs to the AP endonuclease 2 family. Zn(2+) serves as cofactor.

The catalysed reaction is Endonucleolytic cleavage to 5'-phosphooligonucleotide end-products.. In terms of biological role, endonuclease IV plays a role in DNA repair. It cleaves phosphodiester bonds at apurinic or apyrimidinic (AP) sites, generating a 3'-hydroxyl group and a 5'-terminal sugar phosphate. The protein is Probable endonuclease 4 of Protochlamydia amoebophila (strain UWE25).